The primary structure comprises 411 residues: Dual-specificity RNA methyltransferase RlmN (411 aa).

Glu124 serves as the catalytic Proton acceptor. Positions 130-379 constitute a Radical SAM core domain; it reads EEGRGTLCIS…IRTPRGRDIL (250 aa). Cys137 and Cys382 are oxidised to a cystine. [4Fe-4S] cluster is bound by residues Cys144, Cys148, and Cys151. Residues 208-209, Ser240, 262-264, and Asn339 contribute to the S-adenosyl-L-methionine site; these read GE and SLH. Cys382 functions as the S-methylcysteine intermediate in the catalytic mechanism.

Belongs to the radical SAM superfamily. RlmN family. Requires [4Fe-4S] cluster as cofactor.

Its subcellular location is the cytoplasm. It catalyses the reaction adenosine(2503) in 23S rRNA + 2 reduced [2Fe-2S]-[ferredoxin] + 2 S-adenosyl-L-methionine = 2-methyladenosine(2503) in 23S rRNA + 5'-deoxyadenosine + L-methionine + 2 oxidized [2Fe-2S]-[ferredoxin] + S-adenosyl-L-homocysteine. The enzyme catalyses adenosine(37) in tRNA + 2 reduced [2Fe-2S]-[ferredoxin] + 2 S-adenosyl-L-methionine = 2-methyladenosine(37) in tRNA + 5'-deoxyadenosine + L-methionine + 2 oxidized [2Fe-2S]-[ferredoxin] + S-adenosyl-L-homocysteine. Functionally, specifically methylates position 2 of adenine 2503 in 23S rRNA and position 2 of adenine 37 in tRNAs. m2A2503 modification seems to play a crucial role in the proofreading step occurring at the peptidyl transferase center and thus would serve to optimize ribosomal fidelity. The polypeptide is Dual-specificity RNA methyltransferase RlmN (Sinorhizobium fredii (strain NBRC 101917 / NGR234)).